Consider the following 255-residue polypeptide: Putative cysteine-rich repeat secretory protein 10 (255 aa).

Positions 1–26 (MFSSSVSISILVVVAMQFSFIHNVLS) are cleaved as a signal peptide. 2 Gnk2-homologous domains span residues 33-134 (YLQH…EIYT) and 140-252 (FKHY…LYPF).

The protein belongs to the cysteine-rich repeat secretory protein family.

The protein resides in the secreted. In Arabidopsis thaliana (Mouse-ear cress), this protein is Putative cysteine-rich repeat secretory protein 10 (CRRSP10).